Here is a 262-residue protein sequence, read N- to C-terminus: Adenosylcobinamide-GDP ribazoletransferase (262 aa).

Transmembrane regions (helical) follow at residues 43 to 63 (YFGLVGLLVGLLSAIVFWLTQ), 66 to 86 (LPAGVSVLLAMLVGVLLTGGF), 120 to 140 (GALALMLALLLKWQLLVELAL), 146 to 166 (AGSALIVAHTVSRMVSASIIF), 191 to 211 (LLILIASGVLVLLFLKGLAAL), and 242 to 262 (AAQQIAEIVCYFVLLVVGNIL).

It belongs to the CobS family. Mg(2+) is required as a cofactor.

Its subcellular location is the cell inner membrane. It carries out the reaction alpha-ribazole + adenosylcob(III)inamide-GDP = adenosylcob(III)alamin + GMP + H(+). It catalyses the reaction alpha-ribazole 5'-phosphate + adenosylcob(III)inamide-GDP = adenosylcob(III)alamin 5'-phosphate + GMP + H(+). Its pathway is cofactor biosynthesis; adenosylcobalamin biosynthesis; adenosylcobalamin from cob(II)yrinate a,c-diamide: step 7/7. Joins adenosylcobinamide-GDP and alpha-ribazole to generate adenosylcobalamin (Ado-cobalamin). Also synthesizes adenosylcobalamin 5'-phosphate from adenosylcobinamide-GDP and alpha-ribazole 5'-phosphate. The polypeptide is Adenosylcobinamide-GDP ribazoletransferase (Shewanella baltica (strain OS155 / ATCC BAA-1091)).